Consider the following 877-residue polypeptide: Leucine--tRNA ligase (877 aa).

Residues 43-53 carry the 'HIGH' region motif; that stretch reads PYPSGRIHMGH. The 'KMSKS' region motif lies at 628–632; that stretch reads KMSKS. Lysine 631 contributes to the ATP binding site.

The protein belongs to the class-I aminoacyl-tRNA synthetase family.

It localises to the cytoplasm. The enzyme catalyses tRNA(Leu) + L-leucine + ATP = L-leucyl-tRNA(Leu) + AMP + diphosphate. The sequence is that of Leucine--tRNA ligase from Brucella abortus (strain S19).